The sequence spans 238 residues: Large ribosomal subunit protein uL2 (238 aa).

Residues 1–11 (MGKRLISQNRG) are compositionally biased toward polar residues. 2 disordered regions span residues 1-22 (MGKRLISQNRGRGTPTYRAPSH) and 202-223 (FGGGAWKHPGKPTTVSRNAPPG).

This sequence belongs to the universal ribosomal protein uL2 family. Part of the 50S ribosomal subunit. Forms a bridge to the 30S subunit in the 70S ribosome.

Its function is as follows. One of the primary rRNA binding proteins. Required for association of the 30S and 50S subunits to form the 70S ribosome, for tRNA binding and peptide bond formation. It has been suggested to have peptidyltransferase activity; this is somewhat controversial. Makes several contacts with the 16S rRNA in the 70S ribosome. This is Large ribosomal subunit protein uL2 from Methanosarcina mazei (strain ATCC BAA-159 / DSM 3647 / Goe1 / Go1 / JCM 11833 / OCM 88) (Methanosarcina frisia).